The sequence spans 457 residues: NADH-quinone oxidoreductase subunit N (457 aa).

The next 14 helical transmembrane spans lie at 2 to 22, 25 to 45, 60 to 80, 92 to 112, 114 to 134, 149 to 169, 188 to 208, 222 to 242, 253 to 273, 283 to 303, 310 to 330, 353 to 373, 382 to 402, and 431 to 451; these read NAII…FIGL, LIYP…ACTF, NYSV…FILF, GDHY…VSFS, MSML…LAGS, FILG…IYGA, FFIG…AVPF, FITA…FYLM, YLSH…NIAA, LAFS…ILTI, FVYL…VQVV, AFVL…AGFF, VIHA…LISV, and VILA…DILL.

This sequence belongs to the complex I subunit 2 family. As to quaternary structure, NDH-1 is composed of 14 different subunits. Subunits NuoA, H, J, K, L, M, N constitute the membrane sector of the complex.

It is found in the cell inner membrane. It catalyses the reaction a quinone + NADH + 5 H(+)(in) = a quinol + NAD(+) + 4 H(+)(out). NDH-1 shuttles electrons from NADH, via FMN and iron-sulfur (Fe-S) centers, to quinones in the respiratory chain. The immediate electron acceptor for the enzyme in this species is believed to be a menaquinone. Couples the redox reaction to proton translocation (for every two electrons transferred, four hydrogen ions are translocated across the cytoplasmic membrane), and thus conserves the redox energy in a proton gradient. In Cytophaga hutchinsonii (strain ATCC 33406 / DSM 1761 / CIP 103989 / NBRC 15051 / NCIMB 9469 / D465), this protein is NADH-quinone oxidoreductase subunit N.